Consider the following 188-residue polypeptide: MNKEGRAIHSLLVTGYKAHELGIFQESHQGVHYLKKTIENRLRPFIEEGTEWIITSGQLGVEQWAADVVFSLKETAYPHIKLAILPPFEGQEANWSQAAQERYAARLAMADFVECISKRPYEHVGQLRQKNDFLVQRTDGLLVLYDEEKQGSPLYYIASAKAQGKPIFYISPEEVEETVRQDQYDDFL.

Belongs to the UPF0398 family.

In Shouchella clausii (strain KSM-K16) (Alkalihalobacillus clausii), this protein is UPF0398 protein ABC2016.